We begin with the raw amino-acid sequence, 535 residues long: MRLAFWLYEGTALHGISRITNSMKGVHTVYHAPQGDDYITATYTMLERTPDFPGLSISVVRGRDLAQGVSRLPSTLQQVDHHYSPDLTVIAPSCSTALLQEDLNQLAAHSGVPSEKLLVYALNPFRVSENEAADGLFTELVKRYAVAQEKTPTPSVNLLGFTSLGFHLRANLTSLRRMLEALGIAVNVVAPWGSGIDDLAKLPAAWLNIAPYREIGATAAAYLDETCGMPAMYEAPIGVEPTTAWLRKLLDEINRIAGQKGLSRLAMPAPRAFSLDGLSAPSGVPWFARTADMESFSNKRAFVFGDATHTVALVKFLRDELGMQIIGAGTYLERHADWVRKELDGYLPGELMVTDRFQDVAKFIDDQMPDLVCGTQMERHSCRKLDVPCMVICPPTHIENHLLGYYPFFGFDGADVIADRVYLSCKLGLEKHLIDFFGDAGLEYEESDDAAKAEPDQPVSNAHGHTESKTVSQGEPIASDEGGISWSDEAETMLKKVPFFVRKKVRKNTEDFALGIGESCVTAEVFRKAKESLGG.

D36 is a [4Fe-4S] cluster binding site. Residue D292 is the Proton donor of the active site. 428-429 (GL) lines the substrate pocket. Positions 447-483 (SDDAAKAEPDQPVSNAHGHTESKTVSQGEPIASDEGG) are disordered.

Belongs to the ChlB/BchB/BchZ family. As to quaternary structure, protochlorophyllide reductase is composed of three subunits; BchL, BchN and BchB. Forms a heterotetramer of two BchB and two BchN subunits. The cofactor is [4Fe-4S] cluster.

It catalyses the reaction chlorophyllide a + oxidized 2[4Fe-4S]-[ferredoxin] + 2 ADP + 2 phosphate = protochlorophyllide a + reduced 2[4Fe-4S]-[ferredoxin] + 2 ATP + 2 H2O. The protein operates within porphyrin-containing compound metabolism; bacteriochlorophyll biosynthesis (light-independent). Component of the dark-operative protochlorophyllide reductase (DPOR) that uses Mg-ATP and reduced ferredoxin to reduce ring D of protochlorophyllide (Pchlide) to form chlorophyllide a (Chlide). This reaction is light-independent. The NB-protein (BchN-BchB) is the catalytic component of the complex. The sequence is that of Light-independent protochlorophyllide reductase subunit B from Chlorobium phaeobacteroides (strain DSM 266 / SMG 266 / 2430).